We begin with the raw amino-acid sequence, 241 residues long: Adenosylcobinamide-GDP ribazoletransferase (241 aa).

7 helical membrane passes run 34–54, 55–75, 109–129, 133–153, 165–185, 186–206, and 221–241; these read RIPAYFTIVGYIPGLIYFTGS, FLSLNFGIIAPLLSIVLGFYL, VGPFAVFYGVLYVIVFWELIT, PVAFVFGSVFGRYTMDVVLVF, MLFPFNRFLLVPATLFTLPLL, LIDVKLFLVSIFSSWLVGFLI, and VLGGSCLIGQIVVLLILNYLI.

It belongs to the CobS family. Requires Mg(2+) as cofactor.

The protein localises to the cell inner membrane. It carries out the reaction alpha-ribazole + adenosylcob(III)inamide-GDP = adenosylcob(III)alamin + GMP + H(+). It catalyses the reaction alpha-ribazole 5'-phosphate + adenosylcob(III)inamide-GDP = adenosylcob(III)alamin 5'-phosphate + GMP + H(+). It functions in the pathway cofactor biosynthesis; adenosylcobalamin biosynthesis; adenosylcobalamin from cob(II)yrinate a,c-diamide: step 7/7. Its function is as follows. Joins adenosylcobinamide-GDP and alpha-ribazole to generate adenosylcobalamin (Ado-cobalamin). Also synthesizes adenosylcobalamin 5'-phosphate from adenosylcobinamide-GDP and alpha-ribazole 5'-phosphate. The sequence is that of Adenosylcobinamide-GDP ribazoletransferase from Fervidobacterium nodosum (strain ATCC 35602 / DSM 5306 / Rt17-B1).